The sequence spans 65 residues: uncharacterized protein (65 aa).

The interval 1–30 is disordered; it reads MPAASLESLLPPPPGKLPSPPLRPHGKFQR. Pro residues predominate over residues 10–23; it reads LPPPPGKLPSPPLR.

This is an uncharacterized protein from Homo sapiens (Human).